A 115-amino-acid polypeptide reads, in one-letter code: Large ribosomal subunit protein uL24 (115 aa).

The protein belongs to the universal ribosomal protein uL24 family. In terms of assembly, part of the 50S ribosomal subunit.

Functionally, one of two assembly initiator proteins, it binds directly to the 5'-end of the 23S rRNA, where it nucleates assembly of the 50S subunit. Its function is as follows. One of the proteins that surrounds the polypeptide exit tunnel on the outside of the subunit. The polypeptide is Large ribosomal subunit protein uL24 (Amoebophilus asiaticus (strain 5a2)).